The following is a 198-amino-acid chain: Recombination protein RecR (198 aa).

The C4-type zinc-finger motif lies at 57-72 (CSICGNLTDEDPCAIC). The region spanning 80–175 (STILIVEDSR…KVTRLARGLA (96 aa)) is the Toprim domain.

This sequence belongs to the RecR family.

Functionally, may play a role in DNA repair. It seems to be involved in an RecBC-independent recombinational process of DNA repair. It may act with RecF and RecO. The polypeptide is Recombination protein RecR (Streptococcus gordonii (strain Challis / ATCC 35105 / BCRC 15272 / CH1 / DL1 / V288)).